The sequence spans 1435 residues: Dicer-like protein 2 (1435 aa).

The region spanning 54 to 234 (MLSESLRQNI…LEVLEINLNA (181 aa)) is the Helicase ATP-binding domain. 67-74 (MDTGSGKT) is an ATP binding site. Residues 175–178 (DEAH) carry the DEAH box motif. Positions 400–564 (KLIDFLVLEH…ENKRALEHIQ (165 aa)) constitute a Helicase C-terminal domain. The Dicer dsRNA-binding fold domain maps to 591-684 (ARNHLSHFCG…MPAHHHIDDE (94 aa)). RNase III domains lie at 956–1099 (ANEL…IDGG) and 1141–1323 (LSEI…IDSQ). The Mg(2+) site is built by glutamate 1178, aspartate 1309, and glutamate 1312.

The protein belongs to the helicase family. Dicer subfamily. It depends on Mg(2+) as a cofactor. Mn(2+) serves as cofactor.

Dicer-like endonuclease involved in cleaving double-stranded RNA in the RNA interference (RNAi) pathway. Produces 21 to 25 bp dsRNAs (siRNAs) which target the selective destruction of homologous RNAs leading to sequence-specific suppression of gene expression, called post-transcriptional gene silencing (PTGS). Part of a broad host defense response against viral infection and transposons. This chain is Dicer-like protein 2 (DCL2), found in Coccidioides immitis (strain RS) (Valley fever fungus).